The chain runs to 246 residues: 23S rRNA (guanosine-2'-O-)-methyltransferase RlmB (246 aa).

Residues Gly-198, Ile-218, and Leu-227 each contribute to the S-adenosyl-L-methionine site.

This sequence belongs to the class IV-like SAM-binding methyltransferase superfamily. RNA methyltransferase TrmH family. RlmB subfamily.

It localises to the cytoplasm. The enzyme catalyses guanosine(2251) in 23S rRNA + S-adenosyl-L-methionine = 2'-O-methylguanosine(2251) in 23S rRNA + S-adenosyl-L-homocysteine + H(+). Functionally, specifically methylates the ribose of guanosine 2251 in 23S rRNA. This is 23S rRNA (guanosine-2'-O-)-methyltransferase RlmB from Shewanella oneidensis (strain ATCC 700550 / JCM 31522 / CIP 106686 / LMG 19005 / NCIMB 14063 / MR-1).